The following is a 172-amino-acid chain: Oleosin 18 kDa (172 aa).

Alanine 2 carries the N-acetylalanine modification. The polar stretch occupies residues 2–38; that stretch reads ADRDRAGQYYQQQRGQVGETVKGILPEKAPSASQALT. A hydrophobic region spans residues 39 to 110; it reads VATLFPLGGL…GGLSSLTFLA (72 aa). The next 3 helical transmembrane spans lie at 42-62, 70-90, and 91-111; these read LFPL…ASVV, VFLI…LAVA, and GFLT…FLAN. The interval 147-172 is disordered; sequence HAIQGRADQAGTGAGAGGGAGTKTSS. Positions 158-172 are enriched in gly residues; it reads TGAGAGGGAGTKTSS.

The protein belongs to the oleosin family.

Its subcellular location is the lipid droplet. It localises to the membrane. In terms of biological role, may have a structural role to stabilize the lipid body during desiccation of the seed by preventing coalescence of the oil. Probably interacts with both lipid and phospholipid moieties of lipid bodies. May also provide recognition signals for specific lipase anchorage in lipolysis during seedling growth. The protein is Oleosin 18 kDa (OLE18) of Oryza sativa subsp. indica (Rice).